Consider the following 293-residue polypeptide: Aspartate carbamoyltransferase catalytic subunit (293 aa).

2 residues coordinate carbamoyl phosphate: Arg50 and Thr51. Lys78 serves as a coordination point for L-aspartate. Positions 100, 127, and 130 each coordinate carbamoyl phosphate. L-aspartate-binding residues include Arg160 and Arg210. Carbamoyl phosphate contacts are provided by Ala253 and Pro254.

It belongs to the aspartate/ornithine carbamoyltransferase superfamily. ATCase family. As to quaternary structure, heterododecamer (2C3:3R2) of six catalytic PyrB chains organized as two trimers (C3), and six regulatory PyrI chains organized as three dimers (R2).

The enzyme catalyses carbamoyl phosphate + L-aspartate = N-carbamoyl-L-aspartate + phosphate + H(+). It participates in pyrimidine metabolism; UMP biosynthesis via de novo pathway; (S)-dihydroorotate from bicarbonate: step 2/3. Its function is as follows. Catalyzes the condensation of carbamoyl phosphate and aspartate to form carbamoyl aspartate and inorganic phosphate, the committed step in the de novo pyrimidine nucleotide biosynthesis pathway. The chain is Aspartate carbamoyltransferase catalytic subunit from Staphylococcus epidermidis (strain ATCC 12228 / FDA PCI 1200).